The chain runs to 248 residues: Triosephosphate isomerase (248 aa).

Substrate is bound at residue 9-11 (NWK). H94 serves as the catalytic Electrophile. E166 serves as the catalytic Proton acceptor. Substrate is bound by residues G172, S212, and 233–234 (GG).

The protein belongs to the triosephosphate isomerase family. As to quaternary structure, homodimer.

It is found in the cytoplasm. It catalyses the reaction D-glyceraldehyde 3-phosphate = dihydroxyacetone phosphate. It participates in carbohydrate biosynthesis; gluconeogenesis. It functions in the pathway carbohydrate degradation; glycolysis; D-glyceraldehyde 3-phosphate from glycerone phosphate: step 1/1. In terms of biological role, involved in the gluconeogenesis. Catalyzes stereospecifically the conversion of dihydroxyacetone phosphate (DHAP) to D-glyceraldehyde-3-phosphate (G3P). This is Triosephosphate isomerase from Clostridium botulinum (strain Eklund 17B / Type B).